The chain runs to 283 residues: Bifunctional protein FolD (283 aa).

Residues 165 to 167, S190, and I231 contribute to the NADP(+) site; that span reads GRS.

The protein belongs to the tetrahydrofolate dehydrogenase/cyclohydrolase family. Homodimer.

The enzyme catalyses (6R)-5,10-methylene-5,6,7,8-tetrahydrofolate + NADP(+) = (6R)-5,10-methenyltetrahydrofolate + NADPH. The catalysed reaction is (6R)-5,10-methenyltetrahydrofolate + H2O = (6R)-10-formyltetrahydrofolate + H(+). It functions in the pathway one-carbon metabolism; tetrahydrofolate interconversion. Its function is as follows. Catalyzes the oxidation of 5,10-methylenetetrahydrofolate to 5,10-methenyltetrahydrofolate and then the hydrolysis of 5,10-methenyltetrahydrofolate to 10-formyltetrahydrofolate. This Janthinobacterium sp. (strain Marseille) (Minibacterium massiliensis) protein is Bifunctional protein FolD.